We begin with the raw amino-acid sequence, 362 residues long: Oxygen-dependent coproporphyrinogen-III oxidase (362 aa).

Ser-118 serves as a coordination point for substrate. 2 residues coordinate a divalent metal cation: His-122 and His-132. Catalysis depends on His-132, which acts as the Proton donor. Residue 134 to 136 participates in substrate binding; the sequence is NYR. His-166 and His-196 together coordinate a divalent metal cation. Positions 286–321 are important for dimerization; the sequence is YVEFNLVWDRGTIFGLQTNGRTESILMSLPPLVRWE.

The protein belongs to the aerobic coproporphyrinogen-III oxidase family. As to quaternary structure, homodimer. The cofactor is a divalent metal cation.

It is found in the cytoplasm. The catalysed reaction is coproporphyrinogen III + O2 + 2 H(+) = protoporphyrinogen IX + 2 CO2 + 2 H2O. Its pathway is porphyrin-containing compound metabolism; protoporphyrin-IX biosynthesis; protoporphyrinogen-IX from coproporphyrinogen-III (O2 route): step 1/1. In terms of biological role, involved in the heme and chlorophyll biosynthesis. Catalyzes the aerobic oxidative decarboxylation of propionate groups of rings A and B of coproporphyrinogen-III to yield the vinyl groups in protoporphyrinogen-IX. This is Oxygen-dependent coproporphyrinogen-III oxidase from Synechococcus sp. (strain CC9605).